The primary structure comprises 99 residues: Integration host factor subunit alpha (99 aa).

The tract at residues 51–71 is disordered; the sequence is NFDLRDKNQRPGRNPKTGEDI.

The protein belongs to the bacterial histone-like protein family. In terms of assembly, heterodimer of an alpha and a beta chain.

Functionally, this protein is one of the two subunits of integration host factor, a specific DNA-binding protein that functions in genetic recombination as well as in transcriptional and translational control. The chain is Integration host factor subunit alpha (ihfA) from Dickeya dadantii (strain 3937) (Erwinia chrysanthemi (strain 3937)).